The primary structure comprises 185 residues: Large ribosomal subunit protein uL5 (185 aa).

This sequence belongs to the universal ribosomal protein uL5 family. In terms of assembly, part of the 50S ribosomal subunit; part of the 5S rRNA subcomplex. Contacts the 5S rRNA and the P site tRNA. Forms a bridge to the 30S subunit in the 70S ribosome. Both N-terminus methionine truncation and retention have been observed for this protein. In terms of processing, may be methylated twice, on undetermined residues.

Functionally, this is one of the proteins that bind and probably mediate the attachment of the 5S RNA into the large ribosomal subunit, where it forms part of the central protuberance. In the 70S ribosome it contacts protein S13 of the 30S subunit (bridge B1b), connecting the 2 subunits; this bridge is implicated in subunit movement. Contacts the P site tRNA; the 5S rRNA and some of its associated proteins might help stabilize positioning of ribosome-bound tRNAs. This chain is Large ribosomal subunit protein uL5, found in Rhodopseudomonas palustris (strain ATCC BAA-98 / CGA009).